We begin with the raw amino-acid sequence, 236 residues long: Biosynthetic peptidoglycan transglycosylase (236 aa).

The chain crosses the membrane as a helical span at residues 12-31 (ALLWFAASSIVLVLVFRWVP).

It belongs to the glycosyltransferase 51 family.

The protein localises to the cell inner membrane. It carries out the reaction [GlcNAc-(1-&gt;4)-Mur2Ac(oyl-L-Ala-gamma-D-Glu-L-Lys-D-Ala-D-Ala)](n)-di-trans,octa-cis-undecaprenyl diphosphate + beta-D-GlcNAc-(1-&gt;4)-Mur2Ac(oyl-L-Ala-gamma-D-Glu-L-Lys-D-Ala-D-Ala)-di-trans,octa-cis-undecaprenyl diphosphate = [GlcNAc-(1-&gt;4)-Mur2Ac(oyl-L-Ala-gamma-D-Glu-L-Lys-D-Ala-D-Ala)](n+1)-di-trans,octa-cis-undecaprenyl diphosphate + di-trans,octa-cis-undecaprenyl diphosphate + H(+). It functions in the pathway cell wall biogenesis; peptidoglycan biosynthesis. Its function is as follows. Peptidoglycan polymerase that catalyzes glycan chain elongation from lipid-linked precursors. This Pseudomonas putida (strain GB-1) protein is Biosynthetic peptidoglycan transglycosylase.